The primary structure comprises 449 residues: GTPase Der (449 aa).

2 consecutive EngA-type G domains span residues 4–174 and 183–358; these read PIVA…PPKT and LRVA…AQRQ. Residues 10 to 17, 57 to 61, 126 to 129, 189 to 196, 236 to 240, and 301 to 304 contribute to the GTP site; these read GRPNVGKS, DTAGL, NKCD, DTAGI, and NKWD. The KH-like domain maps to 359 to 444; that stretch reads KRIPTSELNN…PIVIVFRSRE (86 aa).

Belongs to the TRAFAC class TrmE-Era-EngA-EngB-Septin-like GTPase superfamily. EngA (Der) GTPase family. As to quaternary structure, associates with the 50S ribosomal subunit.

In terms of biological role, GTPase that plays an essential role in the late steps of ribosome biogenesis. The sequence is that of GTPase Der from Chloroflexus aggregans (strain MD-66 / DSM 9485).